The chain runs to 190 residues: CD70 antigen (190 aa).

Residues 1 to 17 are Cytoplasmic-facing; sequence MEEEGSGCNVPRLPWAS. Residues 18–38 form a helical membrane-spanning segment; sequence ILRAALLLLLIGMVIYCFLCG. Topologically, residues 39–190 are extracellular; sequence QRFTQQQLDS…TFFGVQLVRP (152 aa). The THD domain maps to 52 to 188; sequence DLAELLLNHT…DETFFGVQLV (137 aa). Asparagine 59 and asparagine 110 each carry an N-linked (GlcNAc...) asparagine glycan. Intrachain disulfides connect cysteine 111-cysteine 148 and cysteine 130-cysteine 165. Residue asparagine 167 is glycosylated (N-linked (GlcNAc...) asparagine).

Belongs to the tumor necrosis factor family. In terms of assembly, homotrimer. N-glycosylated.

Its subcellular location is the cell membrane. In terms of biological role, expressed at the plasma membrane of B cells, it is the ligand of the CD27 receptor which is specifically expressed at the surface of T cells. The CD70-CD27 signaling pathway mediates antigen-specific T cell activation and expansion which in turn provides immune surveillance of B cells. In Sus scrofa (Pig), this protein is CD70 antigen.